The sequence spans 358 residues: Putative spore germination protein YfkT (358 aa).

The next 10 helical transmembrane spans lie at 10 to 30, 36 to 56, 81 to 101, 107 to 127, 143 to 163, 179 to 199, 210 to 230, 262 to 282, 297 to 317, and 326 to 346; these read LFFGALYTLAVGLKHAPILMI, NAWHSYILGVVIVIPALWLMH, IIILLFSLYFLLINAHDIRFF, ILFLPRTPMAVLGGVIIFVAI, IFLFPFGILVLFLPFTLATQI, LQSGYYAFGTMGELIILPLLF, IFAILLGALLLAVMLFSSISV, IIAAFWIPVIMVKIAGSLYIV, AMYTPTGMFSVVCGFWFFLNT, and IKPIINVVISLLLPLLIYLII.

This sequence belongs to the amino acid-polyamine-organocation (APC) superfamily. Spore germination protein (SGP) (TC 2.A.3.9) family.

It is found in the cell membrane. May be involved in spore germination. In Bacillus subtilis (strain 168), this protein is Putative spore germination protein YfkT (yfkT).